The chain runs to 379 residues: Alcohol dehydrogenase 2 (379 aa).

8 residues coordinate Zn(2+): Cys47, Thr49, His69, Cys99, Cys102, Cys105, Cys113, and Cys177. The an alcohol site is built by Thr49 and His69. Thr49 provides a ligand contact to NAD(+). NAD(+) is bound by residues 202 to 207, Asp226, Lys231, Thr272, Val295, 295 to 297, Phe322, and Arg372; these read GLGAVG and VGV.

This sequence belongs to the zinc-containing alcohol dehydrogenase family. As to quaternary structure, homodimer. Requires Zn(2+) as cofactor.

It is found in the cytoplasm. The enzyme catalyses a primary alcohol + NAD(+) = an aldehyde + NADH + H(+). It catalyses the reaction a secondary alcohol + NAD(+) = a ketone + NADH + H(+). The chain is Alcohol dehydrogenase 2 (ADH2) from Oryza sativa subsp. indica (Rice).